Consider the following 234-residue polypeptide: Sugar fermentation stimulation protein homolog (234 aa).

Belongs to the SfsA family.

The chain is Sugar fermentation stimulation protein homolog from Pseudoalteromonas atlantica (strain T6c / ATCC BAA-1087).